The chain runs to 490 residues: B3 domain-containing protein REM14 (490 aa).

DNA-binding regions (TF-B3) lie at residues 3–95, 130–226, and 236–333; these read NQHF…LGPS, CFSA…LPKG, and CFVA…LSNE. The disordered stretch occupies residues 343 to 367; it reads NEVESLSTDQESHEESSHNEKISRR. A compositionally biased stretch (basic and acidic residues) spans 352–364; sequence QESHEESSHNEKI. The segment at residues 387-484 is a DNA-binding region (TF-B3 4); sequence FVTLNLTPYN…TSCVLKFCSK (98 aa).

It is found in the nucleus. The sequence is that of B3 domain-containing protein REM14 (REM14) from Arabidopsis thaliana (Mouse-ear cress).